The sequence spans 285 residues: Sulfotransferase 2A2 (285 aa).

Lys44, Ser45, Gly46, Thr47, Asn48, and Trp49 together coordinate 3'-phosphoadenylyl sulfate. His99 serves as the catalytic Proton acceptor. 8 residues coordinate 3'-phosphoadenylyl sulfate: Arg121, Ser129, Tyr184, Ser218, Met223, Arg247, Lys248, and Gly249.

It belongs to the sulfotransferase 1 family.

The protein localises to the cytoplasm. It carries out the reaction an alcohol + 3'-phosphoadenylyl sulfate = an alkyl sulfate + adenosine 3',5'-bisphosphate + H(+). Sulfotransferase that utilizes 3'-phospho-5'-adenylyl sulfate (PAPS) as sulfonate donor to catalyze the sulfate conjugation of a potential wide variety of acceptor molecules bearing a hydroxyl group. Sulfonation increases the water solubility of most compounds, and therefore their renal excretion, but it can also result in bioactivation to form active metabolites. The chain is Sulfotransferase 2A2 from Mus musculus (Mouse).